Consider the following 343-residue polypeptide: N-acetyl-gamma-glutamyl-phosphate reductase (343 aa).

The active site involves cysteine 148.

It belongs to the NAGSA dehydrogenase family. Type 1 subfamily.

The protein resides in the cytoplasm. The enzyme catalyses N-acetyl-L-glutamate 5-semialdehyde + phosphate + NADP(+) = N-acetyl-L-glutamyl 5-phosphate + NADPH + H(+). It participates in amino-acid biosynthesis; L-arginine biosynthesis; N(2)-acetyl-L-ornithine from L-glutamate: step 3/4. In terms of biological role, catalyzes the NADPH-dependent reduction of N-acetyl-5-glutamyl phosphate to yield N-acetyl-L-glutamate 5-semialdehyde. The protein is N-acetyl-gamma-glutamyl-phosphate reductase of Caldicellulosiruptor saccharolyticus (strain ATCC 43494 / DSM 8903 / Tp8T 6331).